The chain runs to 337 residues: tRNA N6-adenosine threonylcarbamoyltransferase (337 aa).

Fe cation-binding residues include histidine 111 and histidine 115. Substrate is bound by residues 134 to 138 (LVSGG), aspartate 167, glycine 180, and asparagine 272. Aspartate 300 serves as a coordination point for Fe cation.

This sequence belongs to the KAE1 / TsaD family. The cofactor is Fe(2+).

It is found in the cytoplasm. It catalyses the reaction L-threonylcarbamoyladenylate + adenosine(37) in tRNA = N(6)-L-threonylcarbamoyladenosine(37) in tRNA + AMP + H(+). Functionally, required for the formation of a threonylcarbamoyl group on adenosine at position 37 (t(6)A37) in tRNAs that read codons beginning with adenine. Is involved in the transfer of the threonylcarbamoyl moiety of threonylcarbamoyl-AMP (TC-AMP) to the N6 group of A37, together with TsaE and TsaB. TsaD likely plays a direct catalytic role in this reaction. The chain is tRNA N6-adenosine threonylcarbamoyltransferase from Aeromonas hydrophila subsp. hydrophila (strain ATCC 7966 / DSM 30187 / BCRC 13018 / CCUG 14551 / JCM 1027 / KCTC 2358 / NCIMB 9240 / NCTC 8049).